The sequence spans 860 residues: Spindle and centriole-associated protein 1 (860 aa).

3 disordered regions span residues 160 to 200 (ESVI…SQSN), 232 to 254 (QSQM…QKAA), and 293 to 330 (KQLL…SSSN). Thr-236 carries the post-translational modification Phosphothreonine. Residues 236–249 (TASSGTPSSASPSG) show a composition bias toward low complexity. The span at 308-330 (PSKQKSSMLSASTASTDLPSSSN) shows a compositional bias: polar residues. Residues 383-437 (RYLKESELQLRKEVETRQRLEEALGDHRELIDALTAEVLFLREENTATQARLQQY) are a coiled coil. Ser-646 carries the phosphoserine modification. Residues 729-755 (SSMEERIAELNRQSMEARGKLLQLIEQ) adopt a coiled-coil conformation. 3 positions are modified to phosphoserine: Ser-765, Ser-769, and Ser-824. Residues 790–860 (IPGAEAPESS…GWFALSTHVS (71 aa)) form a disordered region. The segment covering 808 to 824 (SGLNSRRSSGAASNSCS) has biased composition (low complexity).

In terms of assembly, interacts with CEP120.

It is found in the cytoplasm. The protein resides in the cytoskeleton. The protein localises to the microtubule organizing center. Its subcellular location is the centrosome. It localises to the centriole. It is found in the spindle. In terms of biological role, regulator required for centriole duplication. for proper bipolar spindle formation and chromosome congression in mitosis. The sequence is that of Spindle and centriole-associated protein 1 (SPICE1) from Bos taurus (Bovine).